We begin with the raw amino-acid sequence, 346 residues long: Elongation factor Ts (346 aa).

The involved in Mg(2+) ion dislocation from EF-Tu stretch occupies residues 80–83; that stretch reads TDFV.

The protein belongs to the EF-Ts family.

The protein localises to the cytoplasm. Its function is as follows. Associates with the EF-Tu.GDP complex and induces the exchange of GDP to GTP. It remains bound to the aminoacyl-tRNA.EF-Tu.GTP complex up to the GTP hydrolysis stage on the ribosome. The sequence is that of Elongation factor Ts from Streptococcus thermophilus (strain CNRZ 1066).